A 2531-amino-acid polypeptide reads, in one-letter code: MAGTDSSTPIAIIGLSGRFPGEASNPQKLWSVLMNKQSTRSEVPPDRFNVNAFYHPSGSRAGTVNTRWGHFMTRDPAAFDAPFFSVLPEEARAMDPQSRMALECAFEAFENAGMTMDAVAGTRTACYVASFTHDYAELLAQDGESQPRYKFTGCGAGMLANRISWFFDLQAPSVTVDTACSSSLVALHLGCQSIHTGDADMVLVGGANVILSPQMMASQSSLGFLSPDGRSKAFDEQADGYARGEGVGFLLLKPLGAALADGDAIRAVIRGTGVNQDGRTAGITVPSAQAQERLIRSVYDRACLDPVETPFVEAHGTGTRKGDLAEASSLASVFCHRRLPQNPLYIGSVKTNIGHLEAAAGVAQVIKTVLALENGIIPPNIWFTRPSTALPLDRWRLKVPVEPVSWPEGEKRRASINSFGYGGTNAHCVMETLEEYSMGQGAAKAGTLCQEPRCNHEARPREEEAPMLIFWSSHDKGGISRLAAQYAQYLEAKVKSATDRSSLTRRLCMTLHSRRSVMPWKSYIVSHSANSIVESFRNGAAQPLRSSEPPAIVFVFTGQGAQWPGMGRQLIRYPEYLESLQLAGRFLQCLGLQVSVIDEIKATPEQSSLASPEVSQTLCTVLQVALVDLLESFGINPTAVIGHSGGEIAAAYAKGAISREAAWTIAFHRGRLCSSLPDYAPSLQGGMLVAGLGREDCATYIGRLTEGVAVIACVNSPLSCTVAGDLSALDQLEGLLSEAGCFHRRLRVSRAYHSPHMQVIAGECYKAISSARPLADTEKSLNTTMYSTVTRGVVECSDLGPDYWVSNMIEPVEFVGAVESVIRDLGNRTAPTVFVEIGPHSALQGPLRQILDAASSAERFPYTSLLVRGRDAHHTLLESMGSLIQHGCHLKLHEINQLSTEEGFLVNLPPYPWNHDERNRYWAESSVSRKRRFRQHARHDLCGIRVEDDLPGEATWRNILSPSENPWILDHRVQGTIVYPAAGMLTAVVEAVRESVRNVLEISYFELRDVKISRPIVFSSEEDVVHTRLRLRQETGQCPGSFEFQHYSEKGDGWELNCSGSVLAGTPSDSPDAAHRTRYAHCRAASYVETTPRQAYSQWASVGLQFGRWFQNLTQLSKGPSSAIGTVRIPSTTDCMPCGFEQDMLVHPVVLDALVQLGLSTSKEEYEEPHDTMVPVAFSRVHISADIPQGPGTEMVGYSVINDSASGVNVAASDTQWAQPWIILDGLELATLSVRSGDAVGPTAARVPRKLAAATEWLPSIIHTPGDIIQRACNLPGESMQADRACELQWAALIWIQRILRGCPLTDVSPSPPHLRRLHHGMTRLYNSAIQGDSFPEDSRLKMLLSSPRKVQDEALQQVANSSIDGEILDHHCRMLDRILRGNMHSIEALLEESRLHRWYAEGITWRANHDKVSSYLRLHARNNAQAQILEIGGGTGGLTLSALRAMTLSDGSALFDSYCFTDISGGFFEKARKKFAAWAHCMSFVTLNIEHDLERQGFGEAQFDLILADNVLHATKSIRHTLSAVRKLLKPTGRLVLSEITRNMPHITMTVGALEGWWLGVEDGRVWEPTLSVEQWDGALRDTGFSGVDISLHDRPKGDHIMTGMVATARQLGLTPPPTPAVIIIHMHNLTPRVRTFVTGCITQLRALGMDVAVESLGSSSAHDNLHDKTVVLLLDADPEQRDLATINETEWTALKHTLLSCADAVWITRGANADGWNPWASMAQGLVRSLRAENPATAITMVDIACEQDLDSATTISSITRLALAGRRAKITHESHDWEYCIRGREILIPRVMTEDGVNGAVFKSVKSETEQIPFGQPGTSVALTTIEPLRFVQDPAYWLEPLGKDEAEVATRATHLVSSQGQNNSSHGLVTVCGTVTRLGTACHSELSVGDRVMTIQRGAIRNLYRCPLTLCHRIPEKLGDFGVAVRVLWAYTTAFYCLVHKASLKAGEAVLIDCASNTLQESLIRLAQHARAEVFLLVSSEARKNQLASTFLVPPDHILSTGGEGLQGLDMGRRFDLILLDAAPTNLLQQYLAPGARLVLVQHQGRTQHSSFHGSNGSVDRHESWFLDSKGTRLRLPIPGDARMYTIAPDTLSHEDRTIVAQILRHVTELVRSQEIHADSGGAKPGCSRSEESLHITNCVEGAPNQLVVEAHGRALVPDFHNKVIKSRPTAHLLPNATYIIAGGSGGLGASLARWMCHRGARHIVILSRQADTRPGVAKLIEDLAVNGVKVAAVPCDITDSQQDSVFHNMSFGAWNRAIHPKVMGSWNLHTHCPSEVDFFILLSSFVGTVGLRGQANYAAGNSFQDALAHHRRSRGQAGVSLSLGFIDGAGFIAQSSGRVAENVSKFNFLHIQQSEFLQLVELAVTSPDRLPAQVITGCGTGGMVAAREGDPGDVYWLRDPRFQLLAQVDLHHFQRMNSEPAAEGFSLGALLAAAETVGAAATAVLDALCRKLATAASIEAGDIDTSRQLSSYGVDSLLAVDLRAYLATEARLDISVFELMRSRPMRELARDLALRSKYFRSSHVAT.

In terms of domain architecture, Ketosynthase family 3 (KS3) spans serine 7–threonine 432. Residues cysteine 180, histidine 315, and histidine 355 each act as for beta-ketoacyl synthase activity in the active site. Positions phenylalanine 554–serine 882 are malonyl-CoA:ACP transacylase (MAT) domain. Serine 644 functions as the For malonyltransferase activity in the catalytic mechanism. Residues histidine 939–aspartate 1069 are N-terminal hotdog fold. One can recognise a PKS/mFAS DH domain in the interval histidine 939–aspartate 1238. The interval aspartate 940 to serine 1236 is dehydratase (DH) domain. Catalysis depends on histidine 971, which acts as the Proton acceptor; for dehydratase activity. Residues tyrosine 1087–aspartate 1238 are C-terminal hotdog fold. Aspartate 1152 serves as the catalytic Proton donor; for dehydratase activity. The methyltransferase (CMet) domain stretch occupies residues serine 1414–serine 1592. The tract at residues leucine 1832 to arginine 2133 is enoyl reductase (ER) domain. Residues histidine 2156–isoleucine 2331 form a ketoreductase (KR) domain region. The Carrier domain maps to alanine 2444–serine 2521. The residue at position 2481 (serine 2481) is an O-(pantetheine 4'-phosphoryl)serine.

The protein operates within secondary metabolite biosynthesis; terpenoid biosynthesis. In terms of biological role, highly reducing polyketide synthase; part of the gene cluster that mediates the biosynthesis of calidodehydroaustin, a fungal meroterpenoid. The first step of the pathway is the synthesis of 3,5-dimethylorsellinic acid by the polyketide synthase ausA. 3,5-dimethylorsellinic acid is then prenylated by the polyprenyl transferase ausN. Further epoxidation by the FAD-dependent monooxygenase ausM and cyclization by the probable terpene cyclase ausL lead to the formation of protoaustinoid A. Protoaustinoid A is then oxidized to spiro-lactone preaustinoid A3 by the combined action of the FAD-binding monooxygenases ausB and ausC, and the dioxygenase ausE. Acid-catalyzed keto-rearrangement and ring contraction of the tetraketide portion of preaustinoid A3 by ausJ lead to the formation of preaustinoid A4. The aldo-keto reductase ausK, with the help of ausH, is involved in the next step by transforming preaustinoid A4 into isoaustinone which is in turn hydroxylated by the P450 monooxygenase ausI to form austinolide. The cytochrome P450 monooxygenase ausG modifies austinolide to austinol. Austinol is further acetylated to austin by the O-acetyltransferase ausP, which spontaneously changes to dehydroaustin. The cytochrome P450 monooxygenase ausR then converts dehydroaustin is into 7-dehydrodehydroaustin. The hydroxylation catalyzed by ausR permits the O-acetyltransferase ausQ to add an additional acetyl group to the molecule, leading to the formation of acetoxydehydroaustin. The short chain dehydrogenase ausT catalyzes the reduction of the double bond present between carbon atoms 1 and 2 to convert 7-dehydrodehydroaustin into 1,2-dihydro-7-hydroxydehydroaustin. AusQ catalyzes not only an acetylation reaction but also the addition of the PKS ausV diketide product to 1,2-dihydro-7-hydroxydehydroaustin, forming precalidodehydroaustin. Finally, the iron/alpha-ketoglutarate-dependent dioxygenase converts precalidodehydroaustin into calidodehydroaustin. This is Highly reducing polyketide synthase ausV from Aspergillus calidoustus.